The sequence spans 172 residues: C-phycocyanin beta subunit (172 aa).

Residue N72 is modified to N4-methylasparagine. 2 residues coordinate (2R,3E)-phycocyanobilin: C82 and C153.

Belongs to the phycobiliprotein family. As to quaternary structure, heterodimer of an alpha and a beta chain, which further assembles into trimers. The trimers assemble into hexamers, although these were not seen in the crystallographic studies. Part of 2 PBS rod complexes, the conventional CpcG-PBS rod and a photosystem I-specific CpcL-PBS rod, both of which include ferredoxin--NADP reductase (petH). Interacts with rod linker CpcC2 via the latter's N-terminal PBS-linker domain. In terms of processing, contains two covalently linked bilin chromophores.

It localises to the cellular thylakoid membrane. Light-harvesting photosynthetic bile pigment-protein from the phycobiliprotein complex (phycobilisome, PBS). Phycocyanin is the major phycobiliprotein in the PBS rod. This Synechocystis sp. (strain ATCC 27184 / PCC 6803 / Kazusa) protein is C-phycocyanin beta subunit (cpcB).